The chain runs to 135 residues: Small ribosomal subunit protein uS12 (135 aa).

The tract at residues 1–23 is disordered; sequence MPTINQLVRKGRHSKTTKSDSPA. Residue D102 is modified to 3-methylthioaspartic acid.

It belongs to the universal ribosomal protein uS12 family. As to quaternary structure, part of the 30S ribosomal subunit. Contacts proteins S8 and S17. May interact with IF1 in the 30S initiation complex.

Functionally, with S4 and S5 plays an important role in translational accuracy. Its function is as follows. Interacts with and stabilizes bases of the 16S rRNA that are involved in tRNA selection in the A site and with the mRNA backbone. Located at the interface of the 30S and 50S subunits, it traverses the body of the 30S subunit contacting proteins on the other side and probably holding the rRNA structure together. The combined cluster of proteins S8, S12 and S17 appears to hold together the shoulder and platform of the 30S subunit. The chain is Small ribosomal subunit protein uS12 from Lactobacillus gasseri (strain ATCC 33323 / DSM 20243 / BCRC 14619 / CIP 102991 / JCM 1131 / KCTC 3163 / NCIMB 11718 / NCTC 13722 / AM63).